Reading from the N-terminus, the 240-residue chain is Proteasome subunit beta 1 (240 aa).

A propeptide spans 1 to 46 (removed in mature form; by autocatalysis); the sequence is MRDMTPGPDLSGPQAADEFQSDPYAPEVGELPEQSAQDSEKVNKTG. The interval 1–48 is disordered; that stretch reads MRDMTPGPDLSGPQAADEFQSDPYAPEVGELPEQSAQDSEKVNKTGTT. Threonine 47 acts as the Nucleophile in catalysis.

It belongs to the peptidase T1B family. As to quaternary structure, the 20S proteasome core is composed of 14 alpha and 14 beta subunits that assemble into four stacked heptameric rings, resulting in a barrel-shaped structure. The two inner rings, each composed of seven catalytic beta subunits, are sandwiched by two outer rings, each composed of seven alpha subunits. The catalytic chamber with the active sites is on the inside of the barrel. Has a gated structure, the ends of the cylinder being occluded by the N-termini of the alpha-subunits. Is capped at one or both ends by the proteasome regulatory ATPase, PAN.

The protein localises to the cytoplasm. The catalysed reaction is Cleavage of peptide bonds with very broad specificity.. The formation of the proteasomal ATPase PAN-20S proteasome complex, via the docking of the C-termini of PAN into the intersubunit pockets in the alpha-rings, triggers opening of the gate for substrate entry. Interconversion between the open-gate and close-gate conformations leads to a dynamic regulation of the 20S proteasome proteolysis activity. Component of the proteasome core, a large protease complex with broad specificity involved in protein degradation. This Haloarcula marismortui (strain ATCC 43049 / DSM 3752 / JCM 8966 / VKM B-1809) (Halobacterium marismortui) protein is Proteasome subunit beta 1.